The following is a 207-amino-acid chain: MARYLGPKAKLSRREGTDLFLKSARRAISDKAKFDSKPGQHGRTSGTRTSDFGLQLREKQKVKRMYGVLEKQFRRYFEEADRRKGNTGANLLFILESRLDNVVYRMGFGSTRAEARQLVSHKAITVNGNSVNIPSYMVKTGDVIAVRDKSKKQTRVTEALELAKQVGLPAWVDVNADKGEGVFKKVPDRDEFAADVNESLIVELYSR.

The disordered stretch occupies residues 31-53 (KAKFDSKPGQHGRTSGTRTSDFG). Positions 42 to 52 (GRTSGTRTSDF) are enriched in polar residues. Residues 97-158 (SRLDNVVYRM…KSKKQTRVTE (62 aa)) enclose the S4 RNA-binding domain.

Belongs to the universal ribosomal protein uS4 family. In terms of assembly, part of the 30S ribosomal subunit. Contacts protein S5. The interaction surface between S4 and S5 is involved in control of translational fidelity.

One of the primary rRNA binding proteins, it binds directly to 16S rRNA where it nucleates assembly of the body of the 30S subunit. In terms of biological role, with S5 and S12 plays an important role in translational accuracy. This is Small ribosomal subunit protein uS4 from Polaromonas sp. (strain JS666 / ATCC BAA-500).